A 155-amino-acid chain; its full sequence is Cyanate hydratase (155 aa).

Active-site residues include Arg-92, Glu-95, and Ser-118.

It belongs to the cyanase family.

The catalysed reaction is cyanate + hydrogencarbonate + 3 H(+) = NH4(+) + 2 CO2. Its function is as follows. Catalyzes the reaction of cyanate with bicarbonate to produce ammonia and carbon dioxide. The chain is Cyanate hydratase from Mycobacterium avium (strain 104).